The primary structure comprises 298 residues: Leucine-rich repeat-containing protein 38 (298 aa).

Residues 1–31 form the signal peptide; it reads MSLCVAPRHPTGAAAALGLGSLLVLLGPGRA. Disulfide bonds link Cys32–Cys38 and Cys36–Cys46. The 29-residue stretch at 32-60 folds into the LRRNT domain; sequence CPAGCACTDPHTVDCRDRGLPSVPDPFPL. Topologically, residues 32–251 are extracellular; the sequence is CPAGCACTDP…ECKFSLSLTD (220 aa). LRR repeat units follow at residues 61–82, 85–106, 109–130, 133–154, and 157–177; these read DVRKLLVAGNRIQQIPEDFFIF, DLVYLDFRNNSLRSLEEGTFSG, KLAFLDLSYNNLTQLGAGAFRS, RLVKLSLANNHLAGVHEAAFES, and SLQVLELNDNNLRSLNVAALD. Asn119 is a glycosylation site (N-linked (GlcNAc...) asparagine). The 56-residue stretch at 190-245 folds into the LRRCT domain; that stretch reads NPWLCDCDFAHLFSWIQENTSKLPKGLDAIQCSLPMEDRRVALRELSEASFSECKF. 2 disulfides stabilise this stretch: Cys194–Cys221 and Cys196–Cys243. A helical membrane pass occupies residues 252–272; sequence LFIIIFSGVAVSIAAIISSFF. Residues 273–298 lie on the Cytoplasmic side of the membrane; the sequence is LATVVQCFQRCAPNKDTEDEDDDEDD.

Interacts with KCNMA1.

It localises to the cell membrane. Functionally, auxiliary protein of the large-conductance, voltage and calcium-activated potassium channel (BK alpha). Modulates gating properties by producing a marked shift in the BK channel's voltage dependence of activation in the hyperpolarizing direction, and in the absence of calcium. In Mus musculus (Mouse), this protein is Leucine-rich repeat-containing protein 38 (Lrrc38).